The sequence spans 143 residues: Ribonuclease H (143 aa).

The 141-residue stretch at 1–141 (MKHVEIFTDG…VDKLASDAAL (141 aa)) folds into the RNase H type-1 domain. 4 residues coordinate Mg(2+): D9, E47, D69, and D133.

Belongs to the RNase H family. Monomer. Requires Mg(2+) as cofactor.

The protein resides in the cytoplasm. The enzyme catalyses Endonucleolytic cleavage to 5'-phosphomonoester.. In terms of biological role, endonuclease that specifically degrades the RNA of RNA-DNA hybrids. The protein is Ribonuclease H of Novosphingobium aromaticivorans (strain ATCC 700278 / DSM 12444 / CCUG 56034 / CIP 105152 / NBRC 16084 / F199).